Consider the following 79-residue polypeptide: Small ribosomal subunit protein bS21A (79 aa).

Positions 57–79 are disordered; the sequence is LARKKLQREGLLPAPKKVLRPTR.

It belongs to the bacterial ribosomal protein bS21 family.

This Rhizobium johnstonii (strain DSM 114642 / LMG 32736 / 3841) (Rhizobium leguminosarum bv. viciae) protein is Small ribosomal subunit protein bS21A.